The chain runs to 502 residues: Large ribosomal subunit protein uL2m (502 aa).

The interval 458-502 (AMNPVDHPHGGGEGRTKGGRPSVSPWGKPTKAGFRAGVGVGKRRI) is disordered. Over residues 463–473 (DHPHGGGEGRT) the composition is skewed to basic and acidic residues. Positions 493 to 502 (AGVGVGKRRI) are enriched in gly residues.

The protein belongs to the universal ribosomal protein uL2 family.

It localises to the mitochondrion. This Oryza sativa (Rice) protein is Large ribosomal subunit protein uL2m (RPL2).